The following is a 300-amino-acid chain: GTPase Era (300 aa).

The region spanning 4-172 is the Era-type G domain; it reads KSGFVALAGK…LEKIKEELPE (169 aa). Positions 12 to 19 are G1; the sequence is GKPNVGKS. 12 to 19 provides a ligand contact to GTP; it reads GKPNVGKS. The G2 stretch occupies residues 38–42; sequence QTTRN. Positions 59–62 are G3; the sequence is DTPG. GTP contacts are provided by residues 59–63 and 121–124; these read DTPGI and NKID. The G4 stretch occupies residues 121 to 124; it reads NKID. The tract at residues 151–153 is G5; the sequence is ISA. A KH type-2 domain is found at 195 to 280; that stretch reads IREKIFHLTR…YLDLNVKVKE (86 aa).

Belongs to the TRAFAC class TrmE-Era-EngA-EngB-Septin-like GTPase superfamily. Era GTPase family. In terms of assembly, monomer.

It localises to the cytoplasm. Its subcellular location is the cell inner membrane. Functionally, an essential GTPase that binds both GDP and GTP, with rapid nucleotide exchange. Plays a role in 16S rRNA processing and 30S ribosomal subunit biogenesis and possibly also in cell cycle regulation and energy metabolism. The polypeptide is GTPase Era (Thermotoga maritima (strain ATCC 43589 / DSM 3109 / JCM 10099 / NBRC 100826 / MSB8)).